Consider the following 192-residue polypeptide: uncharacterized protein (192 aa).

Residues 29 to 160 (HRQAAVLIPI…PLDIYRRGDS (132 aa)) form the Nudix hydrolase domain. Positions 67–89 (GAVDDTDASAIAAALREAEEEVA) match the Nudix box motif. Residues Glu-83 and Glu-87 each coordinate Mg(2+).

It belongs to the Nudix hydrolase family. PCD1 subfamily. Mn(2+) serves as cofactor. It depends on Mg(2+) as a cofactor.

In terms of biological role, probably mediates the hydrolysis of some nucleoside diphosphate derivatives. This is an uncharacterized protein from Escherichia coli (strain K12).